A 339-amino-acid chain; its full sequence is MVREEVAGSTQTLQWKCVESRVDSKRLYYGRFILSPLRKGQADTVGIALRRALLGEIEGTCITRAKFGSVPHEYSTIAGIEESVQEILLNLKEIVLRSNLYGVRDASICVKGPRYITAQDIILPPSVEIVDTAQPIANLTEPIDFCIDLQIKRDRGYQTELRKNYQDGSYPIDAVSMPVRNVNYSIFSCGNGNEKHEILFLEIWTNGSLTPKEALYEASRNLIDLFLPFLHAEEEGTSFEENKNRFTPPLFTFQKRLTNLKKNKKGIPLNCIFIDQLELTSRTYNCLKRANIHTLLDLLSKTEEDLMRIDSFRMEDRKHIWDTLEKHLPIDLLKNKLSF.

Residues 1–233 form an alpha N-terminal domain (alpha-NTD) region; sequence MVREEVAGST…DLFLPFLHAE (233 aa). Residues 266–339 form an alpha C-terminal domain (alpha-CTD) region; the sequence is GIPLNCIFID…IDLLKNKLSF (74 aa).

Belongs to the RNA polymerase alpha chain family. In terms of assembly, in plastids the minimal PEP RNA polymerase catalytic core is composed of four subunits: alpha, beta, beta', and beta''. When a (nuclear-encoded) sigma factor is associated with the core the holoenzyme is formed, which can initiate transcription.

It is found in the plastid. The protein localises to the chloroplast. The enzyme catalyses RNA(n) + a ribonucleoside 5'-triphosphate = RNA(n+1) + diphosphate. Its function is as follows. DNA-dependent RNA polymerase catalyzes the transcription of DNA into RNA using the four ribonucleoside triphosphates as substrates. This is DNA-directed RNA polymerase subunit alpha from Psathyrostachys juncea (Russian wildrye).